The following is a 213-amino-acid chain: Adenylyl-sulfate kinase (213 aa).

Over residues 1-17 (MPAHQLDDHNQETRSDD) the composition is skewed to basic and acidic residues. Positions 1-20 (MPAHQLDDHNQETRSDDENI) are disordered. ATP is bound at residue 47–54 (GLSGSGKS). The active-site Phosphoserine intermediate is S121.

The protein belongs to the APS kinase family.

It catalyses the reaction adenosine 5'-phosphosulfate + ATP = 3'-phosphoadenylyl sulfate + ADP + H(+). The protein operates within sulfur metabolism; hydrogen sulfide biosynthesis; sulfite from sulfate: step 2/3. Catalyzes the synthesis of activated sulfate. The sequence is that of Adenylyl-sulfate kinase from Yersinia pestis.